Reading from the N-terminus, the 224-residue chain is Response regulator protein GraR (224 aa).

Residues 2–115 (QILLVEDDNT…VLIAKLQAIY (114 aa)) enclose the Response regulatory domain. D51 carries the post-translational modification 4-aspartylphosphate. Residues 126–224 (KRTLTWQDAV…KVGKGYMAHE (99 aa)) constitute a DNA-binding region (ompR/PhoB-type). 3 positions are modified to phosphothreonine: T128, T130, and T149.

Interacts with GraX. Post-translationally, phosphorylated by GraS. Phosphorylated by Stk1; phosphorylation increases the DNA-binding activity of GraR.

The protein localises to the cytoplasm. In terms of biological role, member of the two-component regulatory system GraR/GraS involved in resistance against cationic antimicrobial peptides (CAMPs). Upon phosphorylation by GraS, functions as a transcription regulator by direct binding to promoter regions of target genes such as adhesins, exoproteins, transporters, toxins, and proteins involved in cell wall synthesis. Down-regulates the expression of many genes involved in RNA and amino acid synthesis or glycolysis. This is Response regulator protein GraR (graR) from Staphylococcus aureus (strain Mu50 / ATCC 700699).